The primary structure comprises 315 residues: Acetyl-coenzyme A carboxylase carboxyl transferase subunit alpha (315 aa).

A CoA carboxyltransferase C-terminal domain is found at 39–293 (RLQDKSSTLT…RGELASQLAM (255 aa)).

It belongs to the AccA family. As to quaternary structure, acetyl-CoA carboxylase is a heterohexamer composed of biotin carboxyl carrier protein (AccB), biotin carboxylase (AccC) and two subunits each of ACCase subunit alpha (AccA) and ACCase subunit beta (AccD).

It localises to the cytoplasm. The catalysed reaction is N(6)-carboxybiotinyl-L-lysyl-[protein] + acetyl-CoA = N(6)-biotinyl-L-lysyl-[protein] + malonyl-CoA. It participates in lipid metabolism; malonyl-CoA biosynthesis; malonyl-CoA from acetyl-CoA: step 1/1. In terms of biological role, component of the acetyl coenzyme A carboxylase (ACC) complex. First, biotin carboxylase catalyzes the carboxylation of biotin on its carrier protein (BCCP) and then the CO(2) group is transferred by the carboxyltransferase to acetyl-CoA to form malonyl-CoA. The polypeptide is Acetyl-coenzyme A carboxylase carboxyl transferase subunit alpha (Pseudomonas fluorescens (strain SBW25)).